A 227-amino-acid polypeptide reads, in one-letter code: UPF0758 protein Rxyl_1530 (227 aa).

The 122-residue stretch at 106-227 folds into the MPN domain; it reads VISSPADVDG…YFSMKEHGML (122 aa). Zn(2+)-binding residues include His-177, His-179, and Asp-190. Positions 177 to 190 match the JAMM motif motif; the sequence is HNHPSGRVEPSRED.

Belongs to the UPF0758 family.

This chain is UPF0758 protein Rxyl_1530, found in Rubrobacter xylanophilus (strain DSM 9941 / JCM 11954 / NBRC 16129 / PRD-1).